Here is a 589-residue protein sequence, read N- to C-terminus: MEKRTTYCGNVSAEFIEKEVVLKGWVQKRRDLGGVIFIDLRDREGIVQVVFNPEKSKEAWEIADKCRSEYVIEVKGQVVYRDKEAINPKMKTGEFEVMATDITILNTAKTTPFTIEDDNNVNDELRMKYRYLDLRRPSMTNNIKLRHQVTKTIRHYLDNHDFLDIETPYLGKSTPEGARDYLVPSRVHAGHFYALPQSPQLFKQLLMGAGFDRYYQIVRCFRDEDLRGDRQPEFTQIDIETTFLTPEEIQTYTENMLAEVMKETKGIEISVPFPRMSYDEAMARYGSDKPDTRFAMELIDVAEVVKDVDFKVFQAALENGGHVKALNAKGAADKYSRKDMDNLGKYVSQFGAKGLAWLKVEEDGLKGPIAKFLTEVSDELIAATNAEVGDILMFGADKPEIVAAALGAVRTRLGKELGLIDESKFNFLWIVDWPLFEYDEEAGRYVSAHHPFTQPKAEDVDRLATDPASVYAEAYDVVLNGYELGGGSLRIHTRELQEKMFETLGFTKEEAQDQFGFLLDALDYGFPPHGGIALGLDRLAMLLAGEENIREVIAFPKNGKAIDPMNNAPSLVSPLQLFELNIDVTAIDE.

An L-aspartate-binding site is contributed by Glu176. The interval 200-203 (QLFK) is aspartate. L-aspartate is bound at residue Arg222. ATP-binding positions include 222 to 224 (RDE) and Gln231. His449 lines the L-aspartate pocket. Position 483 (Glu483) interacts with ATP. Position 490 (Arg490) interacts with L-aspartate. 535-538 (GLDR) contacts ATP.

The protein belongs to the class-II aminoacyl-tRNA synthetase family. Type 1 subfamily. Homodimer.

The protein resides in the cytoplasm. The enzyme catalyses tRNA(Asp) + L-aspartate + ATP = L-aspartyl-tRNA(Asp) + AMP + diphosphate. Functionally, catalyzes the attachment of L-aspartate to tRNA(Asp) in a two-step reaction: L-aspartate is first activated by ATP to form Asp-AMP and then transferred to the acceptor end of tRNA(Asp). This is Aspartate--tRNA ligase from Enterococcus faecalis (strain ATCC 700802 / V583).